Reading from the N-terminus, the 428-residue chain is Glutamyl-tRNA reductase (428 aa).

Residues 55–58 (TCNR), Ser114, 119–121 (ETQ), and Gln125 each bind substrate. Residue Cys56 is the Nucleophile of the active site. 194–199 (GAGEMI) is an NADP(+) binding site.

This sequence belongs to the glutamyl-tRNA reductase family. In terms of assembly, homodimer.

It catalyses the reaction (S)-4-amino-5-oxopentanoate + tRNA(Glu) + NADP(+) = L-glutamyl-tRNA(Glu) + NADPH + H(+). Its pathway is porphyrin-containing compound metabolism; protoporphyrin-IX biosynthesis; 5-aminolevulinate from L-glutamyl-tRNA(Glu): step 1/2. Functionally, catalyzes the NADPH-dependent reduction of glutamyl-tRNA(Glu) to glutamate 1-semialdehyde (GSA). This Paraburkholderia phytofirmans (strain DSM 17436 / LMG 22146 / PsJN) (Burkholderia phytofirmans) protein is Glutamyl-tRNA reductase.